A 515-amino-acid polypeptide reads, in one-letter code: ATP synthase subunit alpha (515 aa).

171–178 (GDRQTGKT) serves as a coordination point for ATP.

Belongs to the ATPase alpha/beta chains family. In terms of assembly, F-type ATPases have 2 components, CF(1) - the catalytic core - and CF(0) - the membrane proton channel. CF(1) has five subunits: alpha(3), beta(3), gamma(1), delta(1), epsilon(1). CF(0) has three main subunits: a(1), b(2) and c(9-12). The alpha and beta chains form an alternating ring which encloses part of the gamma chain. CF(1) is attached to CF(0) by a central stalk formed by the gamma and epsilon chains, while a peripheral stalk is formed by the delta and b chains.

The protein localises to the cell inner membrane. It carries out the reaction ATP + H2O + 4 H(+)(in) = ADP + phosphate + 5 H(+)(out). Produces ATP from ADP in the presence of a proton gradient across the membrane. The alpha chain is a regulatory subunit. This is ATP synthase subunit alpha from Stenotrophomonas maltophilia (strain R551-3).